Here is a 309-residue protein sequence, read N- to C-terminus: Ornithine carbamoyltransferase (309 aa).

Carbamoyl phosphate contacts are provided by residues Ser-51–Thr-54, Gln-78, Arg-102, and His-129–Gln-132. Residues Asn-159, Asp-223, and Ser-227–Met-228 each bind L-ornithine. Residues Cys-263 to Leu-264 and Arg-291 each bind carbamoyl phosphate.

The protein belongs to the aspartate/ornithine carbamoyltransferase superfamily. OTCase family.

Its subcellular location is the cytoplasm. The enzyme catalyses carbamoyl phosphate + L-ornithine = L-citrulline + phosphate + H(+). It participates in amino-acid biosynthesis; L-arginine biosynthesis; L-arginine from L-ornithine and carbamoyl phosphate: step 1/3. Functionally, reversibly catalyzes the transfer of the carbamoyl group from carbamoyl phosphate (CP) to the N(epsilon) atom of ornithine (ORN) to produce L-citrulline. This chain is Ornithine carbamoyltransferase, found in Nitratiruptor sp. (strain SB155-2).